Consider the following 183-residue polypeptide: V-type ATP synthase subunit E (183 aa).

It belongs to the V-ATPase E subunit family.

Produces ATP from ADP in the presence of a proton gradient across the membrane. This Fusobacterium nucleatum subsp. nucleatum (strain ATCC 25586 / DSM 15643 / BCRC 10681 / CIP 101130 / JCM 8532 / KCTC 2640 / LMG 13131 / VPI 4355) protein is V-type ATP synthase subunit E.